The following is a 424-amino-acid chain: Homoserine O-succinyltransferase (424 aa).

The AB hydrolase-1 domain occupies 67–381 (NAVLVCHALN…PHGHDAFLLD (315 aa)). S173 acts as the Nucleophile in catalysis. R243 contributes to the substrate binding site. Residues D342 and H375 contribute to the active site. D376 contacts substrate.

The protein belongs to the AB hydrolase superfamily. MetX family. Homodimer.

The protein localises to the cytoplasm. It catalyses the reaction L-homoserine + succinyl-CoA = O-succinyl-L-homoserine + CoA. Its pathway is amino-acid biosynthesis; L-methionine biosynthesis via de novo pathway; O-succinyl-L-homoserine from L-homoserine: step 1/1. In terms of biological role, transfers a succinyl group from succinyl-CoA to L-homoserine, forming succinyl-L-homoserine. In vitro, also has serine succinyl transferase activity. The protein is Homoserine O-succinyltransferase of Bordetella petrii (strain ATCC BAA-461 / DSM 12804 / CCUG 43448).